The sequence spans 338 residues: Lipoate-protein ligase A (338 aa).

A BPL/LPL catalytic domain is found at 29-216; the sequence is PATQRVLFLW…AFFAHYGERV (188 aa). ATP contacts are provided by residues arginine 71, 76–79, and lysine 134; that span reads GAVF. Lysine 134 is a binding site for (R)-lipoate.

Belongs to the LplA family. In terms of assembly, monomer.

Its subcellular location is the cytoplasm. It catalyses the reaction L-lysyl-[lipoyl-carrier protein] + (R)-lipoate + ATP = N(6)-[(R)-lipoyl]-L-lysyl-[lipoyl-carrier protein] + AMP + diphosphate + H(+). The protein operates within protein modification; protein lipoylation via exogenous pathway; protein N(6)-(lipoyl)lysine from lipoate: step 1/2. It participates in protein modification; protein lipoylation via exogenous pathway; protein N(6)-(lipoyl)lysine from lipoate: step 2/2. Its function is as follows. Catalyzes both the ATP-dependent activation of exogenously supplied lipoate to lipoyl-AMP and the transfer of the activated lipoyl onto the lipoyl domains of lipoate-dependent enzymes. The chain is Lipoate-protein ligase A from Escherichia coli (strain SMS-3-5 / SECEC).